We begin with the raw amino-acid sequence, 208 residues long: Ribosomal RNA large subunit methyltransferase E (208 aa).

S-adenosyl-L-methionine contacts are provided by glycine 63, tryptophan 65, aspartate 83, aspartate 99, and aspartate 124. Lysine 164 functions as the Proton acceptor in the catalytic mechanism.

It belongs to the class I-like SAM-binding methyltransferase superfamily. RNA methyltransferase RlmE family.

It is found in the cytoplasm. It carries out the reaction uridine(2552) in 23S rRNA + S-adenosyl-L-methionine = 2'-O-methyluridine(2552) in 23S rRNA + S-adenosyl-L-homocysteine + H(+). Specifically methylates the uridine in position 2552 of 23S rRNA at the 2'-O position of the ribose in the fully assembled 50S ribosomal subunit. In Enterobacter sp. (strain 638), this protein is Ribosomal RNA large subunit methyltransferase E.